The chain runs to 444 residues: IMP-specific 5'-nucleotidase 1 (444 aa).

Residues K132 and H150 each contribute to the ATP site. The Nucleophile role is filled by D170. Residues D170, D172, D178, T204, S207, S308, D363, and K371 each contribute to the IMP site. Residues D170 and D172 each contribute to the Mg(2+) site. Residue D172 is the Proton donor of the active site. D394 lines the Mg(2+) pocket.

This sequence belongs to the ISN1 family. In terms of assembly, homotetramer. Mg(2+) serves as cofactor.

It localises to the cytoplasm. The enzyme catalyses IMP + H2O = inosine + phosphate. At physiological pH, allosterically activated by ATP. ATP binding is a prerequisite to magnesium and substrate binding. ATP binds to 2 of the subunits in the homotetramer inducing a closure of these 2 subunits and the release of the C-terminal loop, thereby activating the enzyme. In this conformation, the enzyme can bind IMP and magnesium which ultimately leads to the release of ATP. At pH 5, ATP does not have an allosteric role and is dispensable for magnesium and substrate binding. Inhibited by phosphocholine and D-myo-inositol-4-phosphate. Functionally, specifically, catalyzes the dephosphorylation of inosine monophosphate (IMP) into inosine. By dephosphorylating IMP, plays a role in the purine salvage pathway. Does not have phosphotransferase activity with IMP as phosphate donor and adenosine as phosphate acceptor. The chain is IMP-specific 5'-nucleotidase 1 from Plasmodium falciparum (isolate 3D7).